Here is a 371-residue protein sequence, read N- to C-terminus: MKFVDEAYIDISAGDGGNGCVSFRHEKYKEFGGPDGGDGGRGGHVYAVADVNLNTLVDYRFSRRHDATRGEHGKGSDMFGAAGNDITLRMPVGTIISDAETGEVLYELLTAGEVVTIAKGGDGGYGNLRFKSAINRAPRQKTPGWPGERKNLKLELKVLADVGLLGMPNAGKSTFIAAVSNARPKIADYPFTTLHPNLGVVRVAAEQSFVVADIPGLIEGASEGAGLGHQFLRHLQRTRLLLHVVDLAPFDDSVDPVAQAKAIVGELQKYDAELYNKPRWLVLNKLDMVPAEERAARVKDFVKRFKWKGPVFEISALTREGCEVLIRTIYKHVHEQQQIEAGPKEIDPRFVEVEGDGVDLTDPRFAPRDSE.

The region spanning 1-159 (MKFVDEAYID…KNLKLELKVL (159 aa)) is the Obg domain. The OBG-type G domain occupies 160–334 (ADVGLLGMPN…LIRTIYKHVH (175 aa)). GTP-binding positions include 166–173 (GMPNAGKS), 191–195 (FTTLH), 213–216 (DIPG), 284–287 (NKLD), and 315–317 (SAL). Mg(2+) is bound by residues serine 173 and threonine 193.

The protein belongs to the TRAFAC class OBG-HflX-like GTPase superfamily. OBG GTPase family. In terms of assembly, monomer. Mg(2+) is required as a cofactor.

Its subcellular location is the cytoplasm. Functionally, an essential GTPase which binds GTP, GDP and possibly (p)ppGpp with moderate affinity, with high nucleotide exchange rates and a fairly low GTP hydrolysis rate. Plays a role in control of the cell cycle, stress response, ribosome biogenesis and in those bacteria that undergo differentiation, in morphogenesis control. This Delftia acidovorans (strain DSM 14801 / SPH-1) protein is GTPase Obg.